Here is a 300-residue protein sequence, read N- to C-terminus: 4-hydroxy-tetrahydrodipicolinate synthase (300 aa).

Thr-54 contributes to the pyruvate binding site. Tyr-142 functions as the Proton donor/acceptor in the catalytic mechanism. The active-site Schiff-base intermediate with substrate is the Lys-170. Ile-212 serves as a coordination point for pyruvate.

The protein belongs to the DapA family. Homotetramer; dimer of dimers.

The protein localises to the cytoplasm. The catalysed reaction is L-aspartate 4-semialdehyde + pyruvate = (2S,4S)-4-hydroxy-2,3,4,5-tetrahydrodipicolinate + H2O + H(+). The protein operates within amino-acid biosynthesis; L-lysine biosynthesis via DAP pathway; (S)-tetrahydrodipicolinate from L-aspartate: step 3/4. Its function is as follows. Catalyzes the condensation of (S)-aspartate-beta-semialdehyde [(S)-ASA] and pyruvate to 4-hydroxy-tetrahydrodipicolinate (HTPA). The sequence is that of 4-hydroxy-tetrahydrodipicolinate synthase from Halorhodospira halophila (strain DSM 244 / SL1) (Ectothiorhodospira halophila (strain DSM 244 / SL1)).